We begin with the raw amino-acid sequence, 513 residues long: MEDRRESELKVFCSKNILSILGFSCIIAVIALLALGLTQNKALPENVKFGIVLDAGSSHTSLYIYRWPAEKENDTGVVTQIEESNVKGPGISGFAKKVNEINVYLTACMERAQKVIPSIQHMETPVYLGATAGMRLLRMENKQMADKILAAVASSISEYPFDFQGARIISGQEEGAYGWITVNYLLGKFTQKLSWFNLKPSKDDTQETYGALDLGGASTQITFVPQNETTESPNNNLYFRLYGKNYSVYTHSFLCYGKDQALLQKLALGLQGTNGIIHEPCFHSRYMRKIKMSVLNEGFCTKRHELNSSFYPLVDIEIRGAGNFQRCRQSIIQLFNTSYCPYSSCSFNGVFLPPLHGQFGAFSAFYYVMEFLNLTSEESVSVEQLTEKLEEFCAQRWEEVQKNFGEVKEKYLSEYCFSGTYILVLLLNGYHFTAESWKNIHFMNKVRSTDVGWTLGYMLNLTNKIPAEEPMSPPLPHSTYVFLMVLFSLILLAVIIVGIVVFHKPSYFWKDMV.

Topologically, residues 1–16 (MEDRRESELKVFCSKN) are cytoplasmic. Residues 17–37 (ILSILGFSCIIAVIALLALGL) form a helical membrane-spanning segment. The Extracellular portion of the chain corresponds to 38-481 (TQNKALPENV…SPPLPHSTYV (444 aa)). A glycan (N-linked (GlcNAc...) asparagine) is linked at asparagine 73. Catalysis depends on glutamate 174, which acts as the Proton acceptor. Residues asparagine 227 and asparagine 245 are each glycosylated (N-linked (GlcNAc...) asparagine). Disulfide bonds link cysteine 255/cysteine 300 and cysteine 281/cysteine 327. N-linked (GlcNAc...) asparagine glycans are attached at residues asparagine 307 and asparagine 336. The cysteines at positions 340 and 345 are disulfide-linked. N-linked (GlcNAc...) asparagine glycosylation occurs at asparagine 373. Cysteine 393 and cysteine 416 are oxidised to a cystine. A glycan (N-linked (GlcNAc...) asparagine) is linked at asparagine 460. The helical transmembrane segment at 482-502 (FLMVLFSLILLAVIIVGIVVF) threads the bilayer. The Cytoplasmic portion of the chain corresponds to 503 to 513 (HKPSYFWKDMV).

Belongs to the GDA1/CD39 NTPase family. In terms of assembly, homodimer; disulfide-linked. Requires Ca(2+) as cofactor. Mg(2+) is required as a cofactor. N-glycosylated. Post-translationally, the N-terminus is blocked. In terms of processing, palmitoylated on Cys-13; which is required for caveola targeting.

Its subcellular location is the membrane. It localises to the caveola. The catalysed reaction is a ribonucleoside 5'-triphosphate + 2 H2O = a ribonucleoside 5'-phosphate + 2 phosphate + 2 H(+). It carries out the reaction a ribonucleoside 5'-triphosphate + H2O = a ribonucleoside 5'-diphosphate + phosphate + H(+). It catalyses the reaction a ribonucleoside 5'-diphosphate + H2O = a ribonucleoside 5'-phosphate + phosphate + H(+). The enzyme catalyses ATP + 2 H2O = AMP + 2 phosphate + 2 H(+). The catalysed reaction is ATP + H2O = ADP + phosphate + H(+). It carries out the reaction ADP + H2O = AMP + phosphate + H(+). It catalyses the reaction CTP + 2 H2O = CMP + 2 phosphate + 2 H(+). The enzyme catalyses CTP + H2O = CDP + phosphate + H(+). The catalysed reaction is CDP + H2O = CMP + phosphate + H(+). It carries out the reaction GTP + 2 H2O = GMP + 2 phosphate + 2 H(+). It catalyses the reaction GTP + H2O = GDP + phosphate + H(+). The enzyme catalyses GDP + H2O = GMP + phosphate + H(+). The catalysed reaction is ITP + 2 H2O = IMP + 2 phosphate + 2 H(+). It carries out the reaction ITP + H2O = IDP + phosphate + H(+). It catalyses the reaction IDP + H2O = IMP + phosphate + H(+). The enzyme catalyses UTP + 2 H2O = UMP + 2 phosphate + 2 H(+). The catalysed reaction is UTP + H2O = UDP + phosphate + H(+). It carries out the reaction UDP + H2O = UMP + phosphate + H(+). Its function is as follows. Catalyzes the hydrolysis of both di- and triphosphate nucleotides (NDPs and NTPs) and hydrolyze NTPs to nucleotide monophosphates (NMPs) in two distinct successive phosphate-releasing steps, with NDPs as intermediates and participates in the regulation of extracellular levels of nucleotides. By hydrolyzing proinflammatory ATP and platelet-activating ADP to AMP, it blocks platelet aggregation and supports blood flow. The polypeptide is Ectonucleoside triphosphate diphosphohydrolase 1 (Bos taurus (Bovine)).